The following is a 420-amino-acid chain: Transcription termination factor Rho (420 aa).

The 76-residue stretch at 49 to 124 folds into the Rho RNA-BD domain; sequence DIFGGGVLEI…LKVDQVNDDK (76 aa). ATP is bound by residues 170–175, 182–187, and arginine 213; these read GKGQRG and KAGKTM.

The protein belongs to the Rho family. Homohexamer. The homohexamer assembles into an open ring structure.

In terms of biological role, facilitates transcription termination by a mechanism that involves Rho binding to the nascent RNA, activation of Rho's RNA-dependent ATPase activity, and release of the mRNA from the DNA template. The polypeptide is Transcription termination factor Rho (Haemophilus influenzae (strain ATCC 51907 / DSM 11121 / KW20 / Rd)).